Reading from the N-terminus, the 308-residue chain is Ribonuclease Z (308 aa).

Zn(2+) contacts are provided by His-63, His-65, Asp-67, His-68, His-140, Asp-211, and His-269. The Proton acceptor role is filled by Asp-67.

It belongs to the RNase Z family. Homodimer. Zn(2+) serves as cofactor.

The catalysed reaction is Endonucleolytic cleavage of RNA, removing extra 3' nucleotides from tRNA precursor, generating 3' termini of tRNAs. A 3'-hydroxy group is left at the tRNA terminus and a 5'-phosphoryl group is left at the trailer molecule.. Its function is as follows. Zinc phosphodiesterase, which displays some tRNA 3'-processing endonuclease activity. Probably involved in tRNA maturation, by removing a 3'-trailer from precursor tRNA. This chain is Ribonuclease Z, found in Bacillus velezensis (strain DSM 23117 / BGSC 10A6 / LMG 26770 / FZB42) (Bacillus amyloliquefaciens subsp. plantarum).